Reading from the N-terminus, the 256-residue chain is Ribosomal RNA small subunit methyltransferase A (256 aa).

6 residues coordinate S-adenosyl-L-methionine: asparagine 12, leucine 14, glycine 39, glutamate 60, aspartate 85, and asparagine 103.

This sequence belongs to the class I-like SAM-binding methyltransferase superfamily. rRNA adenine N(6)-methyltransferase family. RsmA subfamily.

The protein resides in the cytoplasm. The catalysed reaction is adenosine(1518)/adenosine(1519) in 16S rRNA + 4 S-adenosyl-L-methionine = N(6)-dimethyladenosine(1518)/N(6)-dimethyladenosine(1519) in 16S rRNA + 4 S-adenosyl-L-homocysteine + 4 H(+). In terms of biological role, specifically dimethylates two adjacent adenosines (A1518 and A1519) in the loop of a conserved hairpin near the 3'-end of 16S rRNA in the 30S particle. May play a critical role in biogenesis of 30S subunits. The chain is Ribosomal RNA small subunit methyltransferase A from Legionella pneumophila (strain Lens).